We begin with the raw amino-acid sequence, 216 residues long: Probable transaldolase (216 aa).

Catalysis depends on K83, which acts as the Schiff-base intermediate with substrate.

The protein belongs to the transaldolase family. Type 3B subfamily.

The protein resides in the cytoplasm. It catalyses the reaction D-sedoheptulose 7-phosphate + D-glyceraldehyde 3-phosphate = D-erythrose 4-phosphate + beta-D-fructose 6-phosphate. The protein operates within carbohydrate degradation; pentose phosphate pathway; D-glyceraldehyde 3-phosphate and beta-D-fructose 6-phosphate from D-ribose 5-phosphate and D-xylulose 5-phosphate (non-oxidative stage): step 2/3. In terms of biological role, transaldolase is important for the balance of metabolites in the pentose-phosphate pathway. This is Probable transaldolase from Clostridioides difficile (strain 630) (Peptoclostridium difficile).